The sequence spans 161 residues: Crossover junction endodeoxyribonuclease RuvC (161 aa).

Residues Asp7, Glu67, and Asp140 contribute to the active site. Asp7, Glu67, and Asp140 together coordinate Mg(2+).

It belongs to the RuvC family. Homodimer which binds Holliday junction (HJ) DNA. The HJ becomes 2-fold symmetrical on binding to RuvC with unstacked arms; it has a different conformation from HJ DNA in complex with RuvA. In the full resolvosome a probable DNA-RuvA(4)-RuvB(12)-RuvC(2) complex forms which resolves the HJ. Requires Mg(2+) as cofactor.

The protein resides in the cytoplasm. It carries out the reaction Endonucleolytic cleavage at a junction such as a reciprocal single-stranded crossover between two homologous DNA duplexes (Holliday junction).. Its function is as follows. The RuvA-RuvB-RuvC complex processes Holliday junction (HJ) DNA during genetic recombination and DNA repair. Endonuclease that resolves HJ intermediates. Cleaves cruciform DNA by making single-stranded nicks across the HJ at symmetrical positions within the homologous arms, yielding a 5'-phosphate and a 3'-hydroxyl group; requires a central core of homology in the junction. The consensus cleavage sequence is 5'-(A/T)TT(C/G)-3'. Cleavage occurs on the 3'-side of the TT dinucleotide at the point of strand exchange. HJ branch migration catalyzed by RuvA-RuvB allows RuvC to scan DNA until it finds its consensus sequence, where it cleaves and resolves the cruciform DNA. This chain is Crossover junction endodeoxyribonuclease RuvC, found in Natranaerobius thermophilus (strain ATCC BAA-1301 / DSM 18059 / JW/NM-WN-LF).